The primary structure comprises 221 residues: U1 small nuclear ribonucleoprotein C (221 aa).

The segment at 4–36 adopts a Matrin-type zinc-finger fold; sequence YFCDYCDTYLTHDSPSVRKTHCNGRKHKENVRV. The segment at 100 to 168 is disordered; sequence SNPFPTSQAG…PPGAPTLPQP (69 aa). The segment covering 134-166 has biased composition (pro residues); that stretch reads APAPPRMPGPLLMTPPPGAAAPGMAPPGAPTLP.

It belongs to the U1 small nuclear ribonucleoprotein C family. As to quaternary structure, U1 snRNP is composed of the 7 core Sm proteins B/B', D1, D2, D3, E, F and G that assemble in a heptameric protein ring on the Sm site of the small nuclear RNA to form the core snRNP, and at least 3 U1 snRNP-specific proteins U1-70K, U1-A and U1-C. U1-C interacts with U1 snRNA and the 5' splice-site region of the pre-mRNA.

The protein localises to the nucleus. Functionally, component of the spliceosomal U1 snRNP, which is essential for recognition of the pre-mRNA 5' splice-site and the subsequent assembly of the spliceosome. U1-C is directly involved in initial 5' splice-site recognition for both constitutive and regulated alternative splicing. The interaction with the 5' splice-site seems to precede base-pairing between the pre-mRNA and the U1 snRNA. Stimulates commitment or early (E) complex formation by stabilizing the base pairing of the 5' end of the U1 snRNA and the 5' splice-site region. The chain is U1 small nuclear ribonucleoprotein C from Branchiostoma floridae (Florida lancelet).